The chain runs to 956 residues: Calsyntenin-3 (956 aa).

The first 19 residues, 1 to 19 (MTLLLVSLLLASLLQISSG), serve as a signal peptide directing secretion. Over 1–21 (MTLLLVSLLLASLLQISSGNK) the chain is Cytoplasmic. Residues 20–847 (NKANKHKPWI…SHRNSMVPSA (828 aa)) lie on the Extracellular side of the membrane. Residues 22 to 42 (ANKHKPWIEAEYQGIVMENDN) constitute an intramembrane region (helical). Cadherin domains are found at residues 29–145 (IEAE…APVF) and 146–246 (VERL…KPSW). The Cytoplasmic segment spans residues 43–73 (TVLLNPPLFALDKDAPLRYAGEICGFRLHGS). The segment at residues 74–94 (GVPFEAVILDKATGEGLIRAK) is an intramembrane region (helical). Topologically, residues 95 to 139 (EPVDCEAQKEHTFTIQAYDCGEGPDGTNTKKSHKATVHVRVNDVN) are cytoplasmic. Positions 140–160 (EFAPVFVERLYRAAVTEGKLY) form an intramembrane region, helical. The Cytoplasmic segment spans residues 161–248 (DRILRVEAID…KPTCKPSWQG (88 aa)). Residues 249 to 269 (WNKRIEYAPGAGSLALFPGIR) form a helical membrane-spanning segment. The Lumenal portion of the chain corresponds to 270 to 357 (LETCDEPLWN…GTQAVQVPLG (88 aa)). N-linked (GlcNAc...) asparagine glycans are attached at residues asparagine 299, asparagine 327, asparagine 347, asparagine 507, and asparagine 740. Residues 848 to 868 (ATLIIVVCVGFLVLMVILGLV) form a helical membrane-spanning segment. The Cytoplasmic segment spans residues 869-956 (RIHSLHRRVS…RIIESPPHRY (88 aa)). The disordered stretch occupies residues 916–956 (QTCVAGVAGGQQEEEDSSDSEAADSPSSDERRIIESPPHRY). Residues 927 to 937 (QEEEDSSDSEA) show a composition bias toward acidic residues. The span at 943 to 956 (SDERRIIESPPHRY) shows a compositional bias: basic and acidic residues.

It belongs to the calsyntenin family. In terms of assembly, interacts (via cadherin domains) with both alpha and beta isoforms of neurexins (NRXN1, NRXN2 and NRXN3). Directly interacts with APBA2. Forms a tripartite complex with APBA2 and APP. Interacts with low affinity with KLC1. Interacts with SLC23A2/SVCT2. As to quaternary structure, interacts with CIDEA; inhibiting the lipid transferase activity of CIDEA. Interacts with CIDEC; inhibiting the lipid transferase activity of CIDEC. In terms of processing, proteolytically processed under normal cellular conditions. A primary zeta-cleavage generates a large extracellular (soluble) N-terminal domain (sAlc) and a short C-terminal transmembrane fragment (CTF1). A secondary cleavage catalyzed by gamma-secretase within the transmembrane domain releases the beta-Alc-beta chain in the extracellular milieu and produces an intracellular fragment (AlcICD). This processing is strongly suppressed in the tripartite complex formed with APBA2 and APP, which seems to prevent the association with gamma-secretase. Ubiquitinated: endoplasmic reticulum-localized protein is ubiquitinated and degraded by the endoplasmic reticulum-associated degradation (ERAD) pathway. Restricted to the brain (at protein level). In the cerebral cortex, found in the somas and neuropil of all layers. Expressed at highest levels in neurons of cortical layer 5 and, at lower levels, in neurons of the upper layers. Highly expressed in Purkinje cells. Also found in a few scattered interneurons throughout the granule cell layer and occasionally in neurons in the molecular layer (at protein level). In all layers, high levels in a subpopulation of presumptive GABAergic neurons (based on morphology). In terms of tissue distribution, expression is restricted to adipose tissue, with high expression in thermogenic adipocytes (brown adipose tissue).

The protein localises to the postsynaptic cell membrane. The protein resides in the endoplasmic reticulum membrane. Its subcellular location is the golgi apparatus membrane. It is found in the cell projection. It localises to the dendrite. The protein localises to the lipid droplet. Postsynaptic adhesion molecule that binds to presynaptic neurexins to mediate both excitatory and inhibitory synapse formation. Promotes synapse development by acting as a cell adhesion molecule at the postsynaptic membrane, which associates with both neurexin-alpha and neurexin-beta proteins at the presynaptic membrane. Regulates the balance between excitatory and inhibitory synapses by inhibiting formation of excitatory parallel-fiber synapses and promoting formation of inhibitory synapses in the same neuron. May also be involved in ascorbate (vitamin C) uptake via its interaction with SLC23A2/SVCT2. Complex formation with APBA2 and APP, stabilizes APP metabolism and enhances APBA2-mediated suppression of beta-APP40 secretion, due to the retardation of intracellular APP maturation. In terms of biological role, adipose-specific isoform that plays a key role in adaptive thermogenesis. Facilitates the efficient use of stored triglyceride by promoting multilocular morphology of thermogenic adipocytes: acts by inhibiting the activity of CIDEA and CIDEC on lipid droplets, thereby preventing lipid droplet fusion and facilitating lipid utilization. May also participate in adaptive thermogenesis by promoting sympathetic innervation of thermogenic adipose tissue: acts by driving secretion of neurotrophic factor S100B from brown adipocytes, stimulating neurite outgrowth from sympathetic neurons. The chain is Calsyntenin-3 from Mus musculus (Mouse).